Reading from the N-terminus, the 712-residue chain is Probable GTP diphosphokinase RSH3, chloroplastic (712 aa).

The N-terminal 64 residues, 1–64 (MVVATTIALY…LLFSGASVKS (64 aa)), are a transit peptide targeting the chloroplast. Residues 65 to 74 (SSSSSSSHPS) are compositionally biased toward low complexity. Residues 65 to 84 (SSSSSSSHPSVGEELASIRH) are disordered. The HD domain maps to 237–338 (YLQHCVETAM…IKLADRLHNM (102 aa)).

This sequence belongs to the RelA/SpoT family.

It localises to the plastid. It is found in the chloroplast. The catalysed reaction is GTP + ATP = guanosine 3'-diphosphate 5'-triphosphate + AMP. Probable ppGpp (guanosine 3'-diphosphate 5'-diphosphate) synthetase that may be involved in a rapid plant ppGpp-mediated response to pathogens and other stresses. In Arabidopsis thaliana (Mouse-ear cress), this protein is Probable GTP diphosphokinase RSH3, chloroplastic (RSH3).